The primary structure comprises 35 residues: Photosystem II reaction center protein Psb30 (35 aa).

A helical transmembrane segment spans residues Val-7–Leu-27.

The protein belongs to the Psb30/Ycf12 family. In terms of assembly, PSII is composed of 1 copy each of membrane proteins PsbA, PsbB, PsbC, PsbD, PsbE, PsbF, PsbH, PsbI, PsbJ, PsbK, PsbL, PsbM, PsbT, PsbX, PsbY, PsbZ, Psb30/Ycf12, peripheral proteins PsbO, CyanoQ (PsbQ), PsbU, PsbV and a large number of cofactors. It forms dimeric complexes.

It is found in the cellular thylakoid membrane. Its function is as follows. A core subunit of photosystem II (PSII), probably helps stabilize the reaction center. The polypeptide is Photosystem II reaction center protein Psb30 (Synechococcus sp. (strain JA-3-3Ab) (Cyanobacteria bacterium Yellowstone A-Prime)).